We begin with the raw amino-acid sequence, 453 residues long: tRNA modification GTPase MnmE (453 aa).

(6S)-5-formyl-5,6,7,8-tetrahydrofolate is bound by residues Arg-22, Glu-79, and Lys-119. In terms of domain architecture, TrmE-type G spans 215-376 (GMKVVIAGRP…LKQHLKSLMG (162 aa)). K(+) is bound at residue Asn-225. Residues 225-230 (NAGKSS), 244-250 (TEIAGTT), 269-272 (DTAG), and 334-337 (NKAD) each bind GTP. Ser-229 is a binding site for Mg(2+). K(+) contacts are provided by Thr-244, Ile-246, and Thr-249. Thr-250 serves as a coordination point for Mg(2+). Residue Lys-453 participates in (6S)-5-formyl-5,6,7,8-tetrahydrofolate binding.

It belongs to the TRAFAC class TrmE-Era-EngA-EngB-Septin-like GTPase superfamily. TrmE GTPase family. Homodimer. Heterotetramer of two MnmE and two MnmG subunits. Requires K(+) as cofactor.

Its subcellular location is the cytoplasm. In terms of biological role, exhibits a very high intrinsic GTPase hydrolysis rate. Involved in the addition of a carboxymethylaminomethyl (cmnm) group at the wobble position (U34) of certain tRNAs, forming tRNA-cmnm(5)s(2)U34. This is tRNA modification GTPase MnmE from Shewanella baltica (strain OS195).